We begin with the raw amino-acid sequence, 227 residues long: Urease accessory protein UreG (227 aa).

Positions 1-10 (MHLDHAHTHD) are enriched in basic and acidic residues. The segment at 1–22 (MHLDHAHTHDGPSAVSADAHRP) is disordered. Position 35–42 (35–42 (GPVGSGKT)) interacts with GTP.

It belongs to the SIMIBI class G3E GTPase family. UreG subfamily. As to quaternary structure, homodimer. UreD, UreF and UreG form a complex that acts as a GTP-hydrolysis-dependent molecular chaperone, activating the urease apoprotein by helping to assemble the nickel containing metallocenter of UreC. The UreE protein probably delivers the nickel.

Its subcellular location is the cytoplasm. Its function is as follows. Facilitates the functional incorporation of the urease nickel metallocenter. This process requires GTP hydrolysis, probably effectuated by UreG. The protein is Urease accessory protein UreG of Streptomyces avermitilis (strain ATCC 31267 / DSM 46492 / JCM 5070 / NBRC 14893 / NCIMB 12804 / NRRL 8165 / MA-4680).